The sequence spans 396 residues: Purine ribonucleoside efflux pump NepI (396 aa).

At 1–21 (MSEFIAENRGADAITRPNWSA) the chain is on the cytoplasmic side. A helical membrane pass occupies residues 22–42 (VFSVAFCVACLIIVEFLPVSL). Residues 43 to 54 (LTPMAQDLGISE) lie on the Periplasmic side of the membrane. The chain crosses the membrane as a helical span at residues 55-75 (GVAGQSVTVTAFVAMFASLFI). The Cytoplasmic segment spans residues 76–85 (TQTIQATDRR). A helical transmembrane segment spans residues 86–106 (YVVILFAVLLTLSCLLVSFAN). Residue Ser-107 is a topological domain, periplasmic. A helical membrane pass occupies residues 108–128 (FSLLLIGRACLGLALGGFWAM). Residues 129-147 (SASLTMRLVPPRTVPKALS) lie on the Cytoplasmic side of the membrane. Residues 148–168 (VIFGAVSIALVIAAPLGCFLG) form a helical membrane-spanning segment. The Periplasmic portion of the chain corresponds to 169 to 175 (ELIGWRN). A helical transmembrane segment spans residues 176-196 (VFNAAAAMGVLCIFWIIKSLP). At 197-215 (SLPGEPSHQKQNTFRLLQR) the chain is on the cytoplasmic side. A helical membrane pass occupies residues 216 to 236 (PGVMAGMIAIFMSFAGQFAFF). Residues 237 to 255 (TYIRPVYMTLAGFGVDGLT) lie on the Periplasmic side of the membrane. The helical transmembrane segment at 256–276 (LVLLSFGIASFVGTSLSSFIL) threads the bilayer. Over 277 to 281 (KRSVK) the chain is Cytoplasmic. A helical transmembrane segment spans residues 282–302 (LALAGAPFVLALSALVLTLWG). Over 303 to 305 (SDK) the chain is Periplasmic. Residues 306-326 (IVATGVAIIWGLTFALIPVGW) form a helical membrane-spanning segment. Residues 327 to 343 (STWITRSLADQAEKAGS) lie on the Cytoplasmic side of the membrane. The helical transmembrane segment at 344–364 (IQVAVIQLANTCGAAIGGYAL) threads the bilayer. At 365–366 (DN) the chain is on the periplasmic side. A helical membrane pass occupies residues 367 to 387 (IGLTSPLMLSGTLMLLTALLV). The Cytoplasmic portion of the chain corresponds to 388 to 396 (TAKVKMKKS).

This sequence belongs to the major facilitator superfamily. DHA1 family. NepI (TC 2.A.1.2.26) subfamily.

The protein resides in the cell inner membrane. The catalysed reaction is inosine(in) + H(+)(out) = inosine(out) + H(+)(in). It carries out the reaction guanosine(in) + H(+)(out) = guanosine(out) + H(+)(in). Functionally, involved in the efflux of purine ribonucleosides, such as inosine and guanosine. The protein is Purine ribonucleoside efflux pump NepI of Escherichia coli O157:H7.